Consider the following 23-residue polypeptide: NADP-dependent malic enzyme (23 aa).

It belongs to the malic enzymes family. Homotetramer.

It catalyses the reaction (S)-malate + NADP(+) = pyruvate + CO2 + NADPH. The enzyme catalyses oxaloacetate + H(+) = pyruvate + CO2. The sequence is that of NADP-dependent malic enzyme from Populus euphratica (Euphrates poplar).